The primary structure comprises 356 residues: Serendipity locus protein beta (356 aa).

Residues 171 to 193 (IPCHICGEMFSSQEVLERHIKAD) form a C2H2-type 1; degenerate zinc finger. C2H2-type zinc fingers lie at residues 201–223 (ATCNVCGLKVKDDEVLDLHMNLH), 229–251 (LECRYCDKKFSHKRNVLRHMEVH), 257–279 (YQCDKCGERFSLSWLMYNHLMRH), 286–308 (LICEVCHQQFKTKRTYKHHLRTH), and 315–337 (YPCPDCEKSFVDKYTLKVHKRVH).

As to quaternary structure, binds chromatin; requires N-terminal regions to form protein-protein contacts, in addition to DNA specific recognition by the zinc fingers.

It localises to the nucleus. Functionally, binds to the consensus DNA sequence 5'-YCAGAGATGCGCA-3'. This chain is Serendipity locus protein beta (Sry-beta), found in Drosophila melanogaster (Fruit fly).